The primary structure comprises 448 residues: Trk system potassium uptake protein TrkA homolog 1 (448 aa).

Residues 1-124 (MKAVIIGAGE…RAQVGVDLMI (124 aa)) enclose the RCK N-terminal 1 domain. NAD(+)-binding positions include 7–11 (GAGEV), aspartate 29, 70–71 (TG), and arginine 101. The 82-residue stretch at 144-225 (IDAEMFAEGK…MEDLESVFGS (82 aa)) folds into the RCK C-terminal 1 domain. In terms of domain architecture, RCK N-terminal 2 spans 230–348 (RTRILLIGCG…FEMVGIDMAV (119 aa)). Residue 232-262 (RILLIGCGIVGMYLAKLIDKEENADLRIIEH) participates in NAD(+) binding. The 81-residue stretch at 368–448 (QTLTTIEGER…AASEVEKYFK (81 aa)) folds into the RCK C-terminal 2 domain.

Functionally, part of a potassium transport system. In Methanosarcina mazei (strain ATCC BAA-159 / DSM 3647 / Goe1 / Go1 / JCM 11833 / OCM 88) (Methanosarcina frisia), this protein is Trk system potassium uptake protein TrkA homolog 1 (trkA1).